The following is a 496-amino-acid chain: Probable cytosol aminopeptidase (496 aa).

Residues Lys262 and Asp267 each contribute to the Mn(2+) site. Residue Lys274 is part of the active site. Residues Asp285, Asp344, and Glu346 each coordinate Mn(2+). Residue Arg348 is part of the active site.

Belongs to the peptidase M17 family. Mn(2+) serves as cofactor.

The protein localises to the cytoplasm. The enzyme catalyses Release of an N-terminal amino acid, Xaa-|-Yaa-, in which Xaa is preferably Leu, but may be other amino acids including Pro although not Arg or Lys, and Yaa may be Pro. Amino acid amides and methyl esters are also readily hydrolyzed, but rates on arylamides are exceedingly low.. It carries out the reaction Release of an N-terminal amino acid, preferentially leucine, but not glutamic or aspartic acids.. Functionally, presumably involved in the processing and regular turnover of intracellular proteins. Catalyzes the removal of unsubstituted N-terminal amino acids from various peptides. The chain is Probable cytosol aminopeptidase from Rhizobium johnstonii (strain DSM 114642 / LMG 32736 / 3841) (Rhizobium leguminosarum bv. viciae).